The chain runs to 468 residues: Cell division protein FtsA (468 aa).

Positions 416–468 are disordered; sequence NKKDTHENEVESSDEEIYQSEDNHQEHKQNHEHVQDKDKEESKFKKLMKSLFE. The span at 425-434 shows a compositional bias: acidic residues; sequence VESSDEEIYQ. Basic and acidic residues predominate over residues 436-459; the sequence is EDNHQEHKQNHEHVQDKDKEESKF.

It belongs to the FtsA/MreB family. In terms of assembly, self-interacts. Interacts with FtsZ.

It localises to the cell membrane. Cell division protein that is involved in the assembly of the Z ring. May serve as a membrane anchor for the Z ring. The sequence is that of Cell division protein FtsA from Staphylococcus aureus (strain MRSA252).